Reading from the N-terminus, the 2059-residue chain is DNA polymerase theta (2059 aa).

Positions Asp25 to Val45 are disordered. Residues Gln30 to Val45 show a composition bias toward polar residues. The Helicase ATP-binding domain occupies Pro243–Asn416. Ala256–Thr263 is a binding site for ATP. The DEAH box motif lies at Asp357–His360. The 203-residue stretch at Cys464–Ile666 folds into the Helicase C-terminal domain. 4 disordered regions span residues Pro1052–Arg1073, Pro1168–Gly1190, Gln1204–Val1274, and Pro1330–Ser1372. Over residues Glu1062–Asn1071 the composition is skewed to polar residues. A compositionally biased stretch (polar residues) spans Lys1213–Val1274. The segment covering Arg1355 to Asn1365 has biased composition (basic and acidic residues).

The protein belongs to the DNA polymerase type-A family. Mg(2+) serves as cofactor. In adult males, cleaved to produce a 100 kDa form. As to expression, expressed in ovaries (at protein level).

Its subcellular location is the nucleus. It catalyses the reaction DNA(n) + a 2'-deoxyribonucleoside 5'-triphosphate = DNA(n+1) + diphosphate. Resistant to aphidicolin, but sensitive to dideoxythymindine triphosphate (ddTTP) and N-ethyl malemide (NEM). In terms of biological role, multifunctional protein with both DNA polymerase and ATPase activities. Might have 3' to 5' exonuclease activity. Plays a role in different DNA repair pathways such as DNA strand cross-link repair and microhomology-mediated end-joining (MMEJ), an alternative non-homologous end-joining (NHEJ) machinery triggered in response to double-strand breaks. MMEJ is an error-prone repair pathway that produces deletions of sequences from the strand being repaired and promotes genomic rearrangements, such as telomere fusions. Utilizes short microhomologies present in partially and fully single-stranded DNA (ssDNA) as primers for DNA synthesis. Prefers poly(dA)/oligo(dT) as a template-primer. The ATPase activity is necessary during interstrand cross-link (ICL) repair and has a critical role in generating templated insertions during MMEJ. Necessary for processing DNA damage induced by oxygen and N-ethylation. In follicle cells, contributes to double-strand break repair at physiological rereplication forks necessary for survival of fertilized eggs. The chain is DNA polymerase theta from Drosophila melanogaster (Fruit fly).